The chain runs to 122 residues: Conotoxin flf14.2 (122 aa).

The signal sequence occupies residues 1-22 (MGFRVLVLIVMVTTSALPFTFS). A propeptide spanning residues 23–96 (EESGRSPFRP…AESPVGQKRW (74 aa)) is cleaved from the precursor. A disordered region spans residues 53–91 (RADGQPSDMRQPEMRRPEMRRPEVRRPEVRQPEFAESPV). Positions 62-85 (RQPEMRRPEMRRPEVRRPEVRQPE) are enriched in basic and acidic residues. 2 disulfides stabilise this stretch: Cys-101/Cys-121 and Cys-105/Cys-117.

It belongs to the conotoxin R superfamily. Expressed by the venom duct.

The protein resides in the secreted. The polypeptide is Conotoxin flf14.2 (Conus anabathrum floridanus (Florida cone)).